The following is a 481-amino-acid chain: Glutamyl-tRNA(Gln) amidotransferase subunit A (481 aa).

Residues K76 and S151 each act as charge relay system in the active site. S175 acts as the Acyl-ester intermediate in catalysis.

The protein belongs to the amidase family. GatA subfamily. Heterotrimer of A, B and C subunits.

The catalysed reaction is L-glutamyl-tRNA(Gln) + L-glutamine + ATP + H2O = L-glutaminyl-tRNA(Gln) + L-glutamate + ADP + phosphate + H(+). Functionally, allows the formation of correctly charged Gln-tRNA(Gln) through the transamidation of misacylated Glu-tRNA(Gln) in organisms which lack glutaminyl-tRNA synthetase. The reaction takes place in the presence of glutamine and ATP through an activated gamma-phospho-Glu-tRNA(Gln). In Neisseria meningitidis serogroup C / serotype 2a (strain ATCC 700532 / DSM 15464 / FAM18), this protein is Glutamyl-tRNA(Gln) amidotransferase subunit A.